The primary structure comprises 497 residues: Glycerol kinase (497 aa).

Residue threonine 13 participates in ADP binding. Positions 13, 14, and 15 each coordinate ATP. Threonine 13 is a sn-glycerol 3-phosphate binding site. Arginine 17 contacts ADP. The sn-glycerol 3-phosphate site is built by arginine 83, glutamate 84, and tyrosine 135. Positions 83, 84, and 135 each coordinate glycerol. A Phosphohistidine; by HPr modification is found at histidine 231. Aspartate 245 contributes to the sn-glycerol 3-phosphate binding site. Positions 245 and 246 each coordinate glycerol. The ADP site is built by threonine 267 and glycine 310. Positions 267, 310, 314, and 411 each coordinate ATP. ADP is bound by residues glycine 411 and asparagine 415.

The protein belongs to the FGGY kinase family. As to quaternary structure, homotetramer and homodimer (in equilibrium). Post-translationally, the phosphoenolpyruvate-dependent sugar phosphotransferase system (PTS), including enzyme I, and histidine-containing protein (HPr) are required for the phosphorylation, which leads to the activation of the enzyme.

It carries out the reaction glycerol + ATP = sn-glycerol 3-phosphate + ADP + H(+). Its pathway is polyol metabolism; glycerol degradation via glycerol kinase pathway; sn-glycerol 3-phosphate from glycerol: step 1/1. With respect to regulation, activated by phosphorylation and inhibited by fructose 1,6-bisphosphate (FBP). Key enzyme in the regulation of glycerol uptake and metabolism. Catalyzes the phosphorylation of glycerol to yield sn-glycerol 3-phosphate. The protein is Glycerol kinase of Listeria innocua serovar 6a (strain ATCC BAA-680 / CLIP 11262).